A 656-amino-acid polypeptide reads, in one-letter code: Methionine--tRNA ligase (656 aa).

Positions 13-23 (YYPSGNLHIGH) match the 'HIGH' region motif. The short motif at 308 to 312 (KMSKS) is the 'KMSKS' region element. ATP is bound at residue Lys311. Residues 556–656 (DFDKVEIKAA…SAIPNGAVIK (101 aa)) form the tRNA-binding domain.

This sequence belongs to the class-I aminoacyl-tRNA synthetase family. MetG type 2B subfamily. As to quaternary structure, homodimer.

Its subcellular location is the cytoplasm. It carries out the reaction tRNA(Met) + L-methionine + ATP = L-methionyl-tRNA(Met) + AMP + diphosphate. Functionally, is required not only for elongation of protein synthesis but also for the initiation of all mRNA translation through initiator tRNA(fMet) aminoacylation. The sequence is that of Methionine--tRNA ligase from Staphylococcus epidermidis (strain ATCC 12228 / FDA PCI 1200).